Reading from the N-terminus, the 435-residue chain is MQVSVETTQGLERRLTISVPAEKVDVEVKNRLRQISKTQRINGFRPGKVPPSVVQKRFGKSVRQEVAGEIMQRNFVDAIVAEKINPAGRPSFVAKSNEDGKALEFEATFEIYPVVELKDLEKIAIERPEVDVTDADLDEMFVTLQKQHQTWKENKRKTKSGDKLTLDFTGRVDGEEFEGGKAEGFELELGAGRMIPGFEKEVTGMKAGDEATIKVTFPEDYHAENLKGKDAEFDIVIHKTEGPILPEIDEEFAKLFGIEEGGVEALRVEVSKNMARELTQAVKAKVKTQVIDGLLAGHEVDLPSALVTQEVDVLRQQAMQRFQGQMDPKNLPQLPAEMFTEQAERRVKIGLLLGEVIKVNELKVDETKVNELIASAASAYEDPKEVIEYYANNNELMQQMQNVALEEQAVELLVEKAKVSDKKASFNEIMNPEAK.

The 86-residue stretch at 161–246 (GDKLTLDFTG…IHKTEGPILP (86 aa)) folds into the PPIase FKBP-type domain.

The protein belongs to the FKBP-type PPIase family. Tig subfamily.

The protein resides in the cytoplasm. It catalyses the reaction [protein]-peptidylproline (omega=180) = [protein]-peptidylproline (omega=0). Its function is as follows. Involved in protein export. Acts as a chaperone by maintaining the newly synthesized protein in an open conformation. Functions as a peptidyl-prolyl cis-trans isomerase. The protein is Trigger factor of Colwellia psychrerythraea (strain 34H / ATCC BAA-681) (Vibrio psychroerythus).